A 195-amino-acid polypeptide reads, in one-letter code: Peptidyl-tRNA hydrolase (195 aa).

Tyrosine 17 lines the tRNA pocket. Histidine 22 acts as the Proton acceptor in catalysis. Residues tyrosine 68, asparagine 70, and asparagine 116 each contribute to the tRNA site.

The protein belongs to the PTH family. In terms of assembly, monomer.

Its subcellular location is the cytoplasm. It carries out the reaction an N-acyl-L-alpha-aminoacyl-tRNA + H2O = an N-acyl-L-amino acid + a tRNA + H(+). Functionally, hydrolyzes ribosome-free peptidyl-tRNAs (with 1 or more amino acids incorporated), which drop off the ribosome during protein synthesis, or as a result of ribosome stalling. In terms of biological role, catalyzes the release of premature peptidyl moieties from peptidyl-tRNA molecules trapped in stalled 50S ribosomal subunits, and thus maintains levels of free tRNAs and 50S ribosomes. The protein is Peptidyl-tRNA hydrolase of Shewanella putrefaciens (strain CN-32 / ATCC BAA-453).